Consider the following 258-residue polypeptide: Small ribosomal subunit protein uS2 (258 aa).

The interval 227 to 258 (GEQFAPASEQKEEVKTQEVQEVEDSNDDVIDD) is disordered. A compositionally biased stretch (basic and acidic residues) spans 235-244 (EQKEEVKTQE). Over residues 246–258 (QEVEDSNDDVIDD) the composition is skewed to acidic residues.

This sequence belongs to the universal ribosomal protein uS2 family.

This chain is Small ribosomal subunit protein uS2, found in Caldicellulosiruptor saccharolyticus (strain ATCC 43494 / DSM 8903 / Tp8T 6331).